A 165-amino-acid polypeptide reads, in one-letter code: Cysteine-rich hydrophobic domain-containing protein 2 (165 aa).

Residues 1 to 26 (MADFDEIYEEEEDEERALEEQLLKYS) adopt a coiled-coil conformation. A CHIC motif (Cys-rich) motif is present at residues 88 to 106 (CGCLCCCCTLGCSMWPVIC).

Belongs to the CHIC family. Post-translationally, palmitoylation in the CHIC motif is required for membrane association.

The protein resides in the membrane. It localises to the golgi apparatus. The chain is Cysteine-rich hydrophobic domain-containing protein 2 (Chic2) from Mus musculus (Mouse).